Here is a 353-residue protein sequence, read N- to C-terminus: Photosystem II protein D1 (353 aa).

Threonine 2 bears the N-acetylthreonine mark. Threonine 2 bears the Phosphothreonine mark. 3 consecutive transmembrane segments (helical) span residues 29–46, 118–133, and 142–156; these read YIGW…TATS, HFLL…EWEL, and WIAV…AATA. Histidine 118 serves as a coordination point for chlorophyll a. Tyrosine 126 is a binding site for pheophytin a. Aspartate 170 and glutamate 189 together coordinate [CaMn4O5] cluster. A helical transmembrane segment spans residues 197–218; the sequence is FHMLGVAGVFGGSLFSAMHGSL. Histidine 198 is a binding site for chlorophyll a. Residues histidine 215 and 264–265 contribute to the a quinone site; that span reads SF. Histidine 215 provides a ligand contact to Fe cation. Histidine 272 lines the Fe cation pocket. Residues 274 to 288 form a helical membrane-spanning segment; it reads FLTAWPVVGIWFTAL. [CaMn4O5] cluster is bound by residues histidine 332, glutamate 333, aspartate 342, and alanine 344. Positions 345–353 are excised as a propeptide; it reads VVEAPSTNG.

Belongs to the reaction center PufL/M/PsbA/D family. PSII is composed of 1 copy each of membrane proteins PsbA, PsbB, PsbC, PsbD, PsbE, PsbF, PsbH, PsbI, PsbJ, PsbK, PsbL, PsbM, PsbT, PsbX, PsbY, PsbZ, Psb30/Ycf12, at least 3 peripheral proteins of the oxygen-evolving complex and a large number of cofactors. It forms dimeric complexes. It depends on The D1/D2 heterodimer binds P680, chlorophylls that are the primary electron donor of PSII, and subsequent electron acceptors. It shares a non-heme iron and each subunit binds pheophytin, quinone, additional chlorophylls, carotenoids and lipids. D1 provides most of the ligands for the Mn4-Ca-O5 cluster of the oxygen-evolving complex (OEC). There is also a Cl(-1) ion associated with D1 and D2, which is required for oxygen evolution. The PSII complex binds additional chlorophylls, carotenoids and specific lipids. as a cofactor. In terms of processing, tyr-161 forms a radical intermediate that is referred to as redox-active TyrZ, YZ or Y-Z. C-terminally processed by CTPA; processing is essential to allow assembly of the oxygen-evolving complex and thus photosynthetic growth.

The protein resides in the plastid. The protein localises to the chloroplast thylakoid membrane. The enzyme catalyses 2 a plastoquinone + 4 hnu + 2 H2O = 2 a plastoquinol + O2. Functionally, photosystem II (PSII) is a light-driven water:plastoquinone oxidoreductase that uses light energy to abstract electrons from H(2)O, generating O(2) and a proton gradient subsequently used for ATP formation. It consists of a core antenna complex that captures photons, and an electron transfer chain that converts photonic excitation into a charge separation. The D1/D2 (PsbA/PsbD) reaction center heterodimer binds P680, the primary electron donor of PSII as well as several subsequent electron acceptors. This chain is Photosystem II protein D1, found in Aethionema cordifolium (Lebanon stonecress).